A 322-amino-acid polypeptide reads, in one-letter code: Malate dehydrogenase (322 aa).

Residues Gly10–Gly15 and Asp34 contribute to the NAD(+) site. Residues Arg83 and Arg89 each contribute to the substrate site. NAD(+)-binding positions include Asn96 and Ile119 to Asn121. Substrate-binding residues include Asn121 and Arg152. Residue His176 is the Proton acceptor of the active site.

Belongs to the LDH/MDH superfamily. MDH type 3 family.

It carries out the reaction (S)-malate + NAD(+) = oxaloacetate + NADH + H(+). Catalyzes the reversible oxidation of malate to oxaloacetate. The polypeptide is Malate dehydrogenase (Nitrobacter winogradskyi (strain ATCC 25391 / DSM 10237 / CIP 104748 / NCIMB 11846 / Nb-255)).